A 742-amino-acid chain; its full sequence is ATP-dependent RNA helicase DBP7 (742 aa).

The disordered stretch occupies residues 45-100 (GKTVSRKRKANTTGDEGIIPGRGENSIKKLHKESSYSSEEQEKYKGRNAHNTQGRT). Residues 143-172 (DQFASLGVTSLLVSHLEQKMRIKKPTSIQK) carry the Q motif motif. The 195-residue stretch at 178–372 (IIGNAGKNDF…NVALKDYKLI (195 aa)) folds into the Helicase ATP-binding domain. 191-198 (AQTGSGKT) contributes to the ATP binding site. A DEAD box motif is present at residues 307 to 310 (DEGD). The Helicase C-terminal domain occupies 405–605 (TLAATLNNIT…ILMPAFKDVN (201 aa)). Residues 701-726 (AMGLQSSKDGNSEKKPTKENSKNKMF) form a disordered region. The span at 710-722 (GNSEKKPTKENSK) shows a compositional bias: basic and acidic residues.

This sequence belongs to the DEAD box helicase family. DDX31/DBP7 subfamily.

Its subcellular location is the nucleus. It is found in the nucleolus. It carries out the reaction ATP + H2O = ADP + phosphate + H(+). Its function is as follows. ATP-binding RNA helicase involved in the biogenesis of 60S ribosomal subunits and is required for the normal formation of 25S and 5.8S rRNAs. The protein is ATP-dependent RNA helicase DBP7 (DBP7) of Saccharomyces cerevisiae (strain YJM789) (Baker's yeast).